The sequence spans 624 residues: Galactan 5-O-arabinofuranosyltransferase (624 aa).

Helical transmembrane passes span 5–25 (VLGQ…VAIA), 43–63 (ALTT…GLLW), 73–93 (LGAL…PLGA), 127–147 (IGLP…IAAA), 159–179 (WSIV…AAMI), 181–201 (FEYA…YAST), 203–223 (PYAA…WAGL), 234–254 (AIVG…LLLV), 280–300 (LAVI…PYLL), 326–346 (FPMF…VWLV), 355–375 (AGAL…SMLT), 391–411 (LTVL…LAIA), and 422–442 (VVAA…QDIP).

This sequence belongs to the glycosyltransferase 85 family.

The protein resides in the cell membrane. It carries out the reaction Adds an alpha-D-arabinofuranosyl group from trans,octacis-decaprenylphospho-beta-D-arabinofuranose at the 5-O-position of the eighth, tenth and twelfth galactofuranose unit of the galactofuranan chain of [beta-D-galactofuranosyl-(1-&gt;5)-beta-D-galactofuranosyl-(1-&gt;6)]14-beta-D-galactofuranosyl-(1-&gt;5)-beta-D-galactofuranosyl-(1-&gt;4)-alpha-L-rhamnopyranosyl-(1-&gt;3)-N-acetyl-alpha-D-glucosaminyl-diphospho-trans,octacis-decaprenol.. The protein operates within cell wall biogenesis; cell wall polysaccharide biosynthesis. Its function is as follows. Involved in the biosynthesis of the arabinogalactan (AG) region of the mycolylarabinogalactan-peptidoglycan (mAGP) complex, an essential component of the mycobacterial cell wall. Catalyzes the addition of the first key arabinofuranosyl (Araf) residue from the sugar donor decaprenyl-phospho-arabinose (DPA) on the C-5 of a 6-linked galactofuranosyl (Galf) of the galactan domain, thus 'priming' the galactan for further elaboration by other arabinofuranosyltransferases. It is not able to add an Araf residue to a terminal Galf. This is Galactan 5-O-arabinofuranosyltransferase from Mycolicibacterium smegmatis (strain ATCC 700084 / mc(2)155) (Mycobacterium smegmatis).